The primary structure comprises 439 residues: Methylenetetrahydrofolate--tRNA-(uracil-5-)-methyltransferase TrmFO (439 aa).

Residue 8–13 (GAGLAG) coordinates FAD.

This sequence belongs to the MnmG family. TrmFO subfamily. It depends on FAD as a cofactor.

It is found in the cytoplasm. The catalysed reaction is uridine(54) in tRNA + (6R)-5,10-methylene-5,6,7,8-tetrahydrofolate + NADH + H(+) = 5-methyluridine(54) in tRNA + (6S)-5,6,7,8-tetrahydrofolate + NAD(+). It catalyses the reaction uridine(54) in tRNA + (6R)-5,10-methylene-5,6,7,8-tetrahydrofolate + NADPH + H(+) = 5-methyluridine(54) in tRNA + (6S)-5,6,7,8-tetrahydrofolate + NADP(+). In terms of biological role, catalyzes the folate-dependent formation of 5-methyl-uridine at position 54 (M-5-U54) in all tRNAs. The sequence is that of Methylenetetrahydrofolate--tRNA-(uracil-5-)-methyltransferase TrmFO from Lacticaseibacillus paracasei (strain ATCC 334 / BCRC 17002 / CCUG 31169 / CIP 107868 / KCTC 3260 / NRRL B-441) (Lactobacillus paracasei).